The sequence spans 411 residues: Citrate synthase (411 aa).

Catalysis depends on residues H304 and D363.

Belongs to the citrate synthase family.

The enzyme catalyses oxaloacetate + acetyl-CoA + H2O = citrate + CoA + H(+). Its pathway is carbohydrate metabolism; tricarboxylic acid cycle; isocitrate from oxaloacetate: step 1/2. The chain is Citrate synthase (gltA) from Rickettsia massiliae.